Here is a 233-residue protein sequence, read N- to C-terminus: Attacin-B (233 aa).

Residues M1–S17 form the signal peptide. Residues R18 to R46 constitute a propeptide that is removed on maturation.

This sequence belongs to the attacin/sarcotoxin-2 family.

The protein resides in the secreted. In terms of biological role, hemolymph antibacterial protein. This is Attacin-B from Hyalophora cecropia (Cecropia moth).